A 132-amino-acid polypeptide reads, in one-letter code: UPF0102 protein LI0223 (132 aa).

This sequence belongs to the UPF0102 family.

The sequence is that of UPF0102 protein LI0223 from Lawsonia intracellularis (strain PHE/MN1-00).